Here is a 272-residue protein sequence, read N- to C-terminus: Large ribosomal subunit protein uL29m (272 aa).

Disordered stretches follow at residues 1 to 29 (MAAAAMRPSMGALGRISSSTPSPLRPLTQ), 56 to 87 (KHRGESAIHRSGTRWRLSMSDEPLPRPVPRNK), and 227 to 272 (AAAT…TPRL). Over residues 17–29 (SSSTPSPLRPLTQ) the composition is skewed to low complexity. Composition is skewed to low complexity over residues 227–238 (AAATEGEQQAAE) and 249–259 (PATAATPESAT). Residues 260-272 (IPSSQQQTDTPRL) are compositionally biased toward polar residues.

The protein belongs to the universal ribosomal protein uL29 family. Component of the mitochondrial large ribosomal subunit. Mature mitochondrial ribosomes consist of a small (37S) and a large (54S) subunit. The 37S subunit contains at least 33 different proteins and 1 molecule of RNA (15S). The 54S subunit contains at least 45 different proteins and 1 molecule of RNA (21S).

It is found in the mitochondrion. This Chaetomium globosum (strain ATCC 6205 / CBS 148.51 / DSM 1962 / NBRC 6347 / NRRL 1970) (Soil fungus) protein is Large ribosomal subunit protein uL29m (MRPL4).